The sequence spans 185 residues: Peptide methionine sulfoxide reductase MsrA (185 aa).

Cys12 is a catalytic residue.

Belongs to the MsrA Met sulfoxide reductase family.

The catalysed reaction is L-methionyl-[protein] + [thioredoxin]-disulfide + H2O = L-methionyl-(S)-S-oxide-[protein] + [thioredoxin]-dithiol. It carries out the reaction [thioredoxin]-disulfide + L-methionine + H2O = L-methionine (S)-S-oxide + [thioredoxin]-dithiol. In terms of biological role, has an important function as a repair enzyme for proteins that have been inactivated by oxidation. Catalyzes the reversible oxidation-reduction of methionine sulfoxide in proteins to methionine. This is Peptide methionine sulfoxide reductase MsrA from Granulibacter bethesdensis (strain ATCC BAA-1260 / CGDNIH1).